A 452-amino-acid polypeptide reads, in one-letter code: Bifunctional protein GlmU (452 aa).

The tract at residues 1 to 226 (MSLTTVILAA…PMEVEGANNR (226 aa)) is pyrophosphorylase. Residues 8–11 (LAAG), lysine 22, glutamine 73, 78–79 (GT), 100–102 (YGD), glycine 137, glutamate 151, asparagine 166, and asparagine 224 contribute to the UDP-N-acetyl-alpha-D-glucosamine site. Aspartate 102 is a Mg(2+) binding site. Asparagine 224 contributes to the Mg(2+) binding site. A linker region spans residues 227–247 (IQLAGLERAYQAWQAQELMLN). The N-acetyltransferase stretch occupies residues 248–452 (GATLADPARI…LDGWKRPVKK (205 aa)). 2 residues coordinate UDP-N-acetyl-alpha-D-glucosamine: arginine 330 and lysine 348. The Proton acceptor role is filled by histidine 360. UDP-N-acetyl-alpha-D-glucosamine contacts are provided by tyrosine 363 and asparagine 374. Acetyl-CoA contacts are provided by residues alanine 377, 383–384 (NY), serine 402, alanine 420, and arginine 437.

It in the N-terminal section; belongs to the N-acetylglucosamine-1-phosphate uridyltransferase family. The protein in the C-terminal section; belongs to the transferase hexapeptide repeat family. As to quaternary structure, homotrimer. It depends on Mg(2+) as a cofactor.

The protein localises to the cytoplasm. It carries out the reaction alpha-D-glucosamine 1-phosphate + acetyl-CoA = N-acetyl-alpha-D-glucosamine 1-phosphate + CoA + H(+). The catalysed reaction is N-acetyl-alpha-D-glucosamine 1-phosphate + UTP + H(+) = UDP-N-acetyl-alpha-D-glucosamine + diphosphate. Its pathway is nucleotide-sugar biosynthesis; UDP-N-acetyl-alpha-D-glucosamine biosynthesis; N-acetyl-alpha-D-glucosamine 1-phosphate from alpha-D-glucosamine 6-phosphate (route II): step 2/2. It participates in nucleotide-sugar biosynthesis; UDP-N-acetyl-alpha-D-glucosamine biosynthesis; UDP-N-acetyl-alpha-D-glucosamine from N-acetyl-alpha-D-glucosamine 1-phosphate: step 1/1. It functions in the pathway bacterial outer membrane biogenesis; LPS lipid A biosynthesis. Its function is as follows. Catalyzes the last two sequential reactions in the de novo biosynthetic pathway for UDP-N-acetylglucosamine (UDP-GlcNAc). The C-terminal domain catalyzes the transfer of acetyl group from acetyl coenzyme A to glucosamine-1-phosphate (GlcN-1-P) to produce N-acetylglucosamine-1-phosphate (GlcNAc-1-P), which is converted into UDP-GlcNAc by the transfer of uridine 5-monophosphate (from uridine 5-triphosphate), a reaction catalyzed by the N-terminal domain. In Pseudoalteromonas translucida (strain TAC 125), this protein is Bifunctional protein GlmU.